A 312-amino-acid chain; its full sequence is MLSSYCNPNEPIPREIPSLKAHIFEYMYQYRNWSKFVGDVKKNHGSIDDLEFTITEFKHVHYMNVARVIVHGVEKFNKCCDNINNNDINLDCELTKNIQKHFQGCSEKIPQIYIYGNFCRSIVSGQLYDNINIMFHDDKCSEMFRQFCIPKNYICRNLQWNWSKGNVRGIDYELNFKGYNDYKVHLFLSWCNDMNIVPDNIYFDVDSLYSTISHENIHFMSSLKSLYPDCNVDKIIKNCTNNKFILLDNTKSPTITHPQPFVFSRNIHLKCINVNKEQHIKFLFLKMKSKGWKCLNEDCETPWCILQKDLLH.

This sequence belongs to the mimivirus R69 family.

This is an uncharacterized protein from Acanthamoeba polyphaga mimivirus (APMV).